The following is a 900-amino-acid chain: Methionine--tRNA ligase, cytoplasmic (900 aa).

In terms of domain architecture, GST C-terminal spans 74–198 (GWEQDDLTNQ…VLKQQGVLAL (125 aa)). Residues 273–283 (PYVNNVPHLGN) carry the 'HIGH' region motif. The 'KMSKS' region signature appears at 593–597 (KFSKS). Lys-596 provides a ligand contact to ATP. Ser-825 bears the Phosphoserine mark. The residue at position 835 (Thr-835) is a Phosphothreonine. Residues 841–897 (QIQALMDEVTKQGNIVRELKAQKADKNEVAAEVAKLLDLKKQLAVAEGKPPEAPKGK) form the WHEP-TRS domain.

Belongs to the class-I aminoacyl-tRNA synthetase family. Monomer. Part of a multisubunit complex that groups tRNA ligases for Arg (RARS1), Asp (DARS1), Gln (QARS1), Ile (IARS1), Leu (LARS1), Lys (KARS1), Met (MARS1) the bifunctional ligase for Glu and Pro (EPRS1) and the auxiliary subunits AIMP1/p43, AIMP2/p38 and EEF1E1/p18. Forms a linear complex that contains MARS1, EEF1E1, EPRS1 and AIMP2 that is at the core of the multisubunit complex.

Its subcellular location is the cytoplasm. It is found in the cytosol. The protein localises to the nucleus. It localises to the nucleolus. The catalysed reaction is tRNA(Met) + L-methionine + ATP = L-methionyl-tRNA(Met) + AMP + diphosphate. With respect to regulation, enzyme activity is increased by spermidine, EEF1A1, and when the Mg(2+) concentration is increased from 5 mM to 13 mM (in vitro), possibly by promoting the dissociation of the complex between the enzyme and its product. Catalyzes the specific attachment of an amino acid to its cognate tRNA in a 2 step reaction: the amino acid (AA) is first activated by ATP to form AA-AMP and then transferred to the acceptor end of the tRNA. Plays a role in the synthesis of ribosomal RNA in the nucleolus. The chain is Methionine--tRNA ligase, cytoplasmic from Homo sapiens (Human).